Here is a 361-residue protein sequence, read N- to C-terminus: G kinase-anchoring protein 1-A (361 aa).

Disordered regions lie at residues 22-111 (DSSS…EDWQ) and 140-183 (FEES…KDFQ). Residues 35-48 (AHSSGKAHSGSAAR) show a composition bias toward low complexity. A coiled-coil region spans residues 51–79 (NKGNEKKKEKRRKKKEQQQSEANELRNLA). The span at 158-168 (KVNKKDKRKNN) shows a compositional bias: basic residues. Coiled-coil stretches lie at residues 246–296 (KDGR…QEGE) and 326–346 (AALE…VKYQ).

It belongs to the GKAP1 family.

The protein localises to the golgi apparatus. May play a role in the regulation of insulin-dependent IRS1 tyrosine phosphorylation in adipocytes. The chain is G kinase-anchoring protein 1-A (gkap1-a) from Xenopus laevis (African clawed frog).